We begin with the raw amino-acid sequence, 390 residues long: ATP-sensitive inward rectifier potassium channel 11 (390 aa).

Topologically, residues 1 to 65 are cytoplasmic; that stretch reads MLSRKGIIPE…LQDVFTTLVD (65 aa). Residues asparagine 48 and arginine 50 each contribute to the ATP site. A helical membrane pass occupies residues 66–92; the sequence is LKWPHTLLIFTMSFLCSWLLFAMVWWL. The Extracellular segment spans residues 93 to 116; it reads IAFAHGDLAPGEGTNVPCVTSIHS. Cysteine 110 and cysteine 142 are joined by a disulfide. An intramembrane region (discontinuously helical; Pore-forming) is located at residues 117–133; that stretch reads FSSAFLFSIEVQVTIGF. Residues threonine 130 and phenylalanine 133 each contribute to the K(+) site. Positions 130-135 match the Selectivity filter motif; sequence TIGFGG. Residues 134–142 lie on the Extracellular side of the membrane; the sequence is GGRMVTEEC. The chain crosses the membrane as a helical span at residues 143 to 171; sequence PLAILILIVQNIVGLMINAIMLGCIFMKT. The Cytoplasmic portion of the chain corresponds to 172-390; it reads AQAHRRAETL…KFSISPDSLS (219 aa). An a 1,2-diacyl-sn-glycero-3-phospho-(1D-myo-inositol-4,5-bisphosphate)-binding site is contributed by arginine 176. Tyrosine 330 serves as a coordination point for ATP. Threonine 341 is modified (phosphothreonine; by MAPK1). Position 385 is a phosphoserine; by MAPK1 (serine 385).

It belongs to the inward rectifier-type potassium channel (TC 1.A.2.1) family. KCNJ11 subfamily. Homotetramer; the homotetramer binds four ATP molecules (one ATP per subunit). Forms an heterooctamer with ABCC8/SUR1; one KCNJ11 homotetramer interacts with four ABCC8/SUR1 molecules. Interacts with ABCC9/SUR2. Post-translationally, phosphorylation by MAPK1 results in changes in channel gating that destabilize the closed states and reduce the ATP sensitivity.

Its subcellular location is the membrane. The catalysed reaction is K(+)(in) = K(+)(out). Its activity is regulated as follows. KATP channels are regulated by cytoplasmic ATP/ADP ratios; ATP inhibits the channel by closing the pore, while ADP activates the channel. Activated by phosphatidylinositol 4,5-biphosphate (PtdIns(4,5)P2). In terms of biological role, inward rectifier potassium channel that forms the pore of ATP-sensitive potassium channels (KATP), regulating potassium permeability as a function of cytoplasmic ATP and ADP concentrations in many different cells. Inward rectifier potassium channels are characterized by a greater tendency to allow potassium to flow into the cell rather than out of it. Their voltage dependence is regulated by the concentration of extracellular potassium; as external potassium is raised, the voltage range of the channel opening shifts to more positive voltages. The inward rectification is mainly due to the blockage of outward current by internal magnesium. Can be blocked by extracellular barium. In pancreatic cells, it forms KATP channels with ABCC8/SUR1. Can form cardiac and smooth muscle-type KATP channels with ABCC9. The sequence is that of ATP-sensitive inward rectifier potassium channel 11 (Kcnj11) from Mus musculus (Mouse).